The sequence spans 660 residues: Poly [ADP-ribose] polymerase 2-A (660 aa).

The 35-residue stretch at 2 to 36 (SARLRVEELRAELQRRGLDASGNKPVLVRRLDAAI) folds into the SAP 1 domain. The segment at 40–92 (EEEEAAVSAAAKEEADAGGVVDGEGNGEDKRKRKRRGDGEDVDNSESDAAKLE) is disordered. The Nuclear localization signal signature appears at 69–75 (KRKRKRR). An SAP 2 domain is found at 91 to 125 (LEGMSYRELQALAKSRGLAANGSKKEVIERLLCAP). The WGR domain maps to 179 to 281 (TYHVLQVWFL…KSFECYARKY (103 aa)). Residues 308–426 (ETKLETRIAS…EIEIATKLLE (119 aa)) enclose the PARP alpha-helical domain. In terms of domain architecture, PARP catalytic spans 434-660 (DPLYARYKQL…LHVSFNFKKR (227 aa)).

Belongs to the ARTD/PARP family.

The protein localises to the nucleus. It carries out the reaction NAD(+) + (ADP-D-ribosyl)n-acceptor = nicotinamide + (ADP-D-ribosyl)n+1-acceptor + H(+).. The enzyme catalyses L-aspartyl-[protein] + NAD(+) = 4-O-(ADP-D-ribosyl)-L-aspartyl-[protein] + nicotinamide. The catalysed reaction is L-glutamyl-[protein] + NAD(+) = 5-O-(ADP-D-ribosyl)-L-glutamyl-[protein] + nicotinamide. Involved in the base excision repair (BER) pathway, by catalyzing the poly(ADP-ribosyl)ation of a limited number of acceptor proteins involved in chromatin architecture and in DNA metabolism. This modification follows DNA damages and appears as an obligatory step in a detection/signaling pathway leading to the reparation of DNA strand breaks. This is Poly [ADP-ribose] polymerase 2-A (PARP2-A) from Oryza sativa subsp. japonica (Rice).